Consider the following 1030-residue polypeptide: Semaphorin-6A (1030 aa).

Residues 1–18 (MRSEALLLYFTLLHFAGA) form the signal peptide. At 19 to 649 (GFPEDSEPIS…KGHDQLVPVT (631 aa)) the chain is on the extracellular side. Residues 24–512 (SEPISISHGN…FSTCVIKVPL (489 aa)) form the Sema domain. N-linked (GlcNAc...) asparagine glycosylation is found at Asn-33, Asn-49, and Asn-65. Cystine bridges form between Cys-107–Cys-117, Cys-135–Cys-144, Cys-258–Cys-369, and Cys-283–Cys-328. The N-linked (GlcNAc...) asparagine glycan is linked to Asn-282. 2 N-linked (GlcNAc...) asparagine glycosylation sites follow: Asn-434 and Asn-461. 4 disulfides stabilise this stretch: Cys-477–Cys-506, Cys-515–Cys-533, Cys-521–Cys-568, and Cys-525–Cys-542. A helical membrane pass occupies residues 650–670 (LLAIAVILAFVMGAVFSGITV). The Cytoplasmic portion of the chain corresponds to 671 to 1030 (YCVCDHRRKD…TSMKPNDACT (360 aa)). Phosphoserine is present on Ser-698. Disordered stretches follow at residues 754-778 (ALPTPESTPTLQQKRKPSRGSREWE), 860-897 (SSKSPNHGVNLVENLDSLPPKVPQREASLGPPGASLSQ), and 912-1030 (YGVD…DACT). Residues 920–936 (YPTNSLTRSHQATTLKR) are compositionally biased toward polar residues. Low complexity predominate over residues 937 to 952 (NNTNSSNSSHLSRNQS). Ser-952 bears the Phosphoserine mark. Composition is skewed to polar residues over residues 970 to 997 (QVHSSQPSGQAVTVSRQPSLNAYNSLTR) and 1018 to 1030 (PLSTSMKPNDACT).

This sequence belongs to the semaphorin family. As to quaternary structure, active as a homodimer or oligomer. The SEMA6A homodimer interacts with a PLXNA2 homodimer, giving rise to a heterotetramer. Interacts with EVL. (Microbial infection) Interacts with P.sordellii toxin TcsL; semaphorins SEMA6A and SEMA6B constitute the major host receptors for TcsL in the vascular endothelium.

The protein localises to the cell membrane. Functionally, cell surface receptor for PLXNA2 that plays an important role in cell-cell signaling. Required for normal granule cell migration in the developing cerebellum. Promotes reorganization of the actin cytoskeleton and plays an important role in axon guidance in the developing central nervous system. Can act as repulsive axon guidance cue. Has repulsive action towards migrating granular neurons. May play a role in channeling sympathetic axons into the sympathetic chains and controlling the temporal sequence of sympathetic target innervation. Its function is as follows. (Microbial infection) Acts as a receptor for P.sordellii toxin TcsL in the in the vascular endothelium. This is Semaphorin-6A (SEMA6A) from Homo sapiens (Human).